The sequence spans 671 residues: E3 ubiquitin-protein ligase pub2 (671 aa).

The region spanning Met1–Leu112 is the C2 domain. Positions Gly242–Asp275 constitute a WW domain. In terms of domain architecture, HECT spans Ser338–Glu671. Catalysis depends on Cys639, which acts as the Glycyl thioester intermediate.

Interacts with the E2 ubiquitin-conjugating enzyme ubc4.

It is found in the membrane. It localises to the cytoplasm. It carries out the reaction S-ubiquitinyl-[E2 ubiquitin-conjugating enzyme]-L-cysteine + [acceptor protein]-L-lysine = [E2 ubiquitin-conjugating enzyme]-L-cysteine + N(6)-ubiquitinyl-[acceptor protein]-L-lysine.. Its pathway is protein modification; protein ubiquitination. In terms of biological role, E3 ubiquitin-protein ligase which accepts ubiquitin from an E2 ubiquitin-conjugating enzyme in the form of a thioester and then directly transfers the ubiquitin to targeted substrates. The polypeptide is E3 ubiquitin-protein ligase pub2 (pub2) (Schizosaccharomyces pombe (strain 972 / ATCC 24843) (Fission yeast)).